Here is a 340-residue protein sequence, read N- to C-terminus: Glycerol-3-phosphate dehydrogenase [NAD(P)+] (340 aa).

NADPH is bound by residues serine 11, tryptophan 12, arginine 33, and lysine 106. 3 residues coordinate sn-glycerol 3-phosphate: lysine 106, glycine 137, and serine 139. Alanine 141 is an NADPH binding site. 5 residues coordinate sn-glycerol 3-phosphate: lysine 192, aspartate 245, serine 255, arginine 256, and asparagine 257. Lysine 192 functions as the Proton acceptor in the catalytic mechanism. Arginine 256 is an NADPH binding site. NADPH contacts are provided by valine 280 and glutamate 282.

Belongs to the NAD-dependent glycerol-3-phosphate dehydrogenase family.

Its subcellular location is the cytoplasm. It carries out the reaction sn-glycerol 3-phosphate + NAD(+) = dihydroxyacetone phosphate + NADH + H(+). The catalysed reaction is sn-glycerol 3-phosphate + NADP(+) = dihydroxyacetone phosphate + NADPH + H(+). Its pathway is membrane lipid metabolism; glycerophospholipid metabolism. Catalyzes the reduction of the glycolytic intermediate dihydroxyacetone phosphate (DHAP) to sn-glycerol 3-phosphate (G3P), the key precursor for phospholipid synthesis. The chain is Glycerol-3-phosphate dehydrogenase [NAD(P)+] from Bacillus anthracis (strain A0248).